The following is a 141-amino-acid chain: Nucleoside diphosphate kinase (141 aa).

ATP-binding residues include lysine 11, phenylalanine 59, arginine 87, threonine 93, arginine 104, and asparagine 114. Histidine 117 (pros-phosphohistidine intermediate) is an active-site residue.

It belongs to the NDK family. Homotetramer. It depends on Mg(2+) as a cofactor.

The protein localises to the cytoplasm. The enzyme catalyses a 2'-deoxyribonucleoside 5'-diphosphate + ATP = a 2'-deoxyribonucleoside 5'-triphosphate + ADP. It carries out the reaction a ribonucleoside 5'-diphosphate + ATP = a ribonucleoside 5'-triphosphate + ADP. Functionally, major role in the synthesis of nucleoside triphosphates other than ATP. The ATP gamma phosphate is transferred to the NDP beta phosphate via a ping-pong mechanism, using a phosphorylated active-site intermediate. The sequence is that of Nucleoside diphosphate kinase from Cupriavidus pinatubonensis (strain JMP 134 / LMG 1197) (Cupriavidus necator (strain JMP 134)).